A 295-amino-acid polypeptide reads, in one-letter code: uncharacterized protein (295 aa).

One can recognise an HTH araC/xylS-type domain in the interval 8–106 (QKTINWIESH…HMPPGAYRTF (99 aa)). The H-T-H motif DNA-binding region spans 25–46 (EDIVNVSSFSKFHFHRIFQKEV).

Functionally, probable transcriptional regulator. This is an uncharacterized protein from Bacillus subtilis (strain 168).